A 197-amino-acid chain; its full sequence is Probable calcium-binding protein CML21 (197 aa).

The segment at 1–33 (MLRPPPPSSVLTASAAAARPPASVVQPQRQAAH) is disordered. The span at 9-30 (SVLTASAAAARPPASVVQPQRQ) shows a compositional bias: low complexity. 3 EF-hand domains span residues 37-72 (AETL…LGAR), 126-161 (EKEA…MGLP), and 164-197 (ACMA…AAGN). D50, D52, D54, E61, D139, D141, D143, Y145, E150, D177, D179, D181, R183, and E188 together coordinate Ca(2+).

Functionally, potential calcium sensor. This chain is Probable calcium-binding protein CML21 (CML21), found in Oryza sativa subsp. japonica (Rice).